A 2163-amino-acid chain; its full sequence is Myosin-VIIa (2163 aa).

The 671-residue stretch at Gln58 to Asp728 folds into the Myosin motor domain. Gly151–Thr158 contributes to the ATP binding site. Actin-binding regions lie at residues Leu607–Glu629 and Gln707–Leu721. 4 consecutive IQ domains span residues Leu731–Arg753, Met754–Arg783, Leu800–Leu822, and Lys823–Arg852. Residues Arg886 to Asp914 adopt a coiled-coil conformation. Residues Pro937–Leu958 form a disordered region. Positions Tyr1003–Lys1239 constitute a MyTH4 1 domain. One can recognise an FERM 1 domain in the interval Ile1244–Ser1554. One can recognise an SH3 domain in the interval Lys1552–Ser1621. In terms of domain architecture, MyTH4 2 spans Tyr1697 to Gln1845. Positions Ile1851 to Met2154 constitute an FERM 2 domain.

This sequence belongs to the TRAFAC class myosin-kinesin ATPase superfamily. Myosin family. Homodimerizes in a two headed molecule through the formation of a coiled-coil rod.

The protein resides in the cytoplasm. Functionally, myosins are actin-based motor molecules with ATPase activity. Unconventional myosins serve in intracellular movements: can function in cells as a single-molecule cargo transporter. A very slow and high-duty-ratio motor, may be suitable for tension maintenance of actin filaments. Their highly divergent tails are presumed to bind to membranous compartments, which would be moved relative to actin filaments. Plays a key role in the formation of cellular projections and other actin-based functions required for embryonic and larval viability. Necessary for auditory transduction: plays a role in Johnston organ (JO) organization by functioning in scolopidial apical attachment and therefore to acoustic stimulus propagation from the antenna a2/a3 joint to transducing elements. The protein is Myosin-VIIa of Aedes aegypti (Yellowfever mosquito).